The following is a 277-amino-acid chain: Type II restriction enzyme EcoRI (277 aa).

Residues Asp91, Glu111, and Lys113 contribute to the active site. Residues Asp91 and Glu111 each contribute to the Mg(2+) site.

It belongs to the EcoRI type II restriction endonuclease family. In terms of assembly, homodimer. Mg(2+) is required as a cofactor.

The enzyme catalyses Endonucleolytic cleavage of DNA to give specific double-stranded fragments with terminal 5'-phosphates.. In terms of biological role, a P subtype restriction enzyme that recognizes the double-stranded sequence 5'-GAATTC-3' and cleaves after G-1. This is Type II restriction enzyme EcoRI (ecoRIR) from Escherichia coli.